Here is a 361-residue protein sequence, read N- to C-terminus: 3-dehydroquinate synthase (361 aa).

NAD(+) contacts are provided by residues D71 to K76, G105 to D109, T129 to T130, K142, K151, and C169 to T172. The Zn(2+) site is built by E184, H247, and H264.

It belongs to the sugar phosphate cyclases superfamily. Dehydroquinate synthase family. It depends on Co(2+) as a cofactor. Zn(2+) is required as a cofactor. The cofactor is NAD(+).

The protein localises to the cytoplasm. The catalysed reaction is 7-phospho-2-dehydro-3-deoxy-D-arabino-heptonate = 3-dehydroquinate + phosphate. Its pathway is metabolic intermediate biosynthesis; chorismate biosynthesis; chorismate from D-erythrose 4-phosphate and phosphoenolpyruvate: step 2/7. In terms of biological role, catalyzes the conversion of 3-deoxy-D-arabino-heptulosonate 7-phosphate (DAHP) to dehydroquinate (DHQ). This is 3-dehydroquinate synthase from Sodalis glossinidius (strain morsitans).